The primary structure comprises 469 residues: 3-isopropylmalate dehydratase large subunit (469 aa).

[4Fe-4S] cluster-binding residues include C347, C408, and C411.

Belongs to the aconitase/IPM isomerase family. LeuC type 1 subfamily. Heterodimer of LeuC and LeuD. It depends on [4Fe-4S] cluster as a cofactor.

The catalysed reaction is (2R,3S)-3-isopropylmalate = (2S)-2-isopropylmalate. Its pathway is amino-acid biosynthesis; L-leucine biosynthesis; L-leucine from 3-methyl-2-oxobutanoate: step 2/4. In terms of biological role, catalyzes the isomerization between 2-isopropylmalate and 3-isopropylmalate, via the formation of 2-isopropylmaleate. The sequence is that of 3-isopropylmalate dehydratase large subunit from Haemophilus influenzae (strain PittEE).